The chain runs to 918 residues: Probable UDP-N-acetylglucosamine--peptide N-acetylglucosaminyltransferase SPINDLY (918 aa).

TPR repeat units follow at residues G34–V66, E67–N99, C101–Y132, A140–Y171, A172–Y205, D207–G238, I239–Y271, D273–C305, A306–F339, Q341–Y373, and A374–S407. Residues R408–V918 are catalytic region. Positions Q843–Q853 are enriched in polar residues. The segment at Q843–P877 is disordered.

It belongs to the glycosyltransferase 41 family. O-GlcNAc transferase subfamily.

Its subcellular location is the nucleus. The enzyme catalyses L-seryl-[protein] + UDP-N-acetyl-alpha-D-glucosamine = 3-O-(N-acetyl-beta-D-glucosaminyl)-L-seryl-[protein] + UDP + H(+). It catalyses the reaction L-threonyl-[protein] + UDP-N-acetyl-alpha-D-glucosamine = 3-O-(N-acetyl-beta-D-glucosaminyl)-L-threonyl-[protein] + UDP + H(+). Its pathway is protein modification; protein glycosylation. Its function is as follows. Probable O-linked N-acetylglucosamine transferase (OGT) involved in various processes such as gibberellin (GA) signaling pathway. OGTs catalyze the addition of nucleotide-activated sugars directly onto the polypeptide through O-glycosidic linkage with the hydroxyl of serine or threonine. Probably acts by adding O-linked sugars to yet unknown proteins. May function as a negative regulator of GA signal transduction during vernalization, inhibiting adventitious shoot elongation during vernalization. The protein is Probable UDP-N-acetylglucosamine--peptide N-acetylglucosaminyltransferase SPINDLY (SPY) of Eustoma exaltatum subsp. russellianum (Bluebells).